A 637-amino-acid polypeptide reads, in one-letter code: Chaperone protein HtpG (637 aa).

An a; substrate-binding region spans residues 1–334 (MQDVVNSEKL…SSDLPLNISR (334 aa)). Residues 335–558 (ETLQNNKVIE…DGSMDIRMER (224 aa)) are b. A c region spans residues 559-637 (FLREQKQLNY…MNNVLVKVYQ (79 aa)).

It belongs to the heat shock protein 90 family. In terms of assembly, homodimer.

It is found in the cytoplasm. Its function is as follows. Molecular chaperone. Has ATPase activity. In Ehrlichia canis (strain Jake), this protein is Chaperone protein HtpG.